A 305-amino-acid chain; its full sequence is tRNA uridine(34) hydroxylase (305 aa).

The Rhodanese domain occupies 130–228 (DDPDTLVIDT…YLGEIPEQES (99 aa)). Cys-188 acts as the Cysteine persulfide intermediate in catalysis.

This sequence belongs to the TrhO family.

The catalysed reaction is uridine(34) in tRNA + AH2 + O2 = 5-hydroxyuridine(34) in tRNA + A + H2O. In terms of biological role, catalyzes oxygen-dependent 5-hydroxyuridine (ho5U) modification at position 34 in tRNAs. In Synechococcus sp. (strain CC9902), this protein is tRNA uridine(34) hydroxylase.